Reading from the N-terminus, the 482-residue chain is L-propargylglycine--L-glutamate ligase (482 aa).

The enzyme catalyses L-propargylglycine + L-glutamate + ATP = L-gamma-glutamyl-L-propargylglycine + ADP + phosphate + H(+). The protein operates within amino-acid metabolism. Its pathway is antibiotic biosynthesis. Involved in the biosynthesis of terminal alkyne-containing amino acids such as L-beta-ethynylserine, that are produced as antibiotics by S.cattleya. Catalyzes the ATP-dependent ligation of L-propargylglycine to L-glutamate to form the dipeptide L-gamma-glutamyl-L-propargylglycine. Is selective for L-propargylglycine over norvaline, allylglycine and the standard proteinogenic amino acids, except L-cysteine which can be used as a substrate to a lesser extent. This Streptantibioticus cattleyicolor (strain ATCC 35852 / DSM 46488 / JCM 4925 / NBRC 14057 / NRRL 8057) (Streptomyces cattleya) protein is L-propargylglycine--L-glutamate ligase.